Consider the following 284-residue polypeptide: Serine/arginine-rich splicing factor RS2Z32 (284 aa).

The region spanning 11–81 is the RRM domain; sequence TRLYVGRLSS…SRITVEASRG (71 aa). Residues 74–97 are disordered; sequence ITVEASRGAPRGSRDNGSRGPPPG. 2 consecutive CCHC-type zinc fingers follow at residues 99–116 and 121–138; these read GRCFNCGVDGHWARDCTA and NKCYRCGERGHIERNCKN. The segment at 132-284 is disordered; it reads IERNCKNSPS…RPSPKGSESP (153 aa). Residues 159–180 show a composition bias toward basic residues; sequence RSPRRRRSPSRSRSYSRGRSYS. S166, S168, and S184 each carry phosphoserine. Over residues 186 to 203 the composition is skewed to basic and acidic residues; that stretch reads VRREKSVEDRSRSPKAME. Residues S205, S207, S214, S216, S225, S235, S255, S265, S277, and S281 each carry the phosphoserine modification. Over residues 209–236 the composition is skewed to basic and acidic residues; the sequence is KGRDQSLSPDRKVIDASPKRGSDYDGSP.

This sequence belongs to the splicing factor SR family. RS2Z subfamily. As to quaternary structure, component of the spliceosome. In terms of processing, extensively phosphorylated on serine residues in the RS domain.

The protein localises to the nucleus. In terms of biological role, probably involved in intron recognition and spliceosome assembly. This chain is Serine/arginine-rich splicing factor RS2Z32 (RS2Z32), found in Arabidopsis thaliana (Mouse-ear cress).